The primary structure comprises 273 residues: Ribosomal RNA small subunit methyltransferase A (273 aa).

S-adenosyl-L-methionine contacts are provided by Asn-18, Leu-20, Gly-45, Glu-66, Asp-91, and Asn-113.

The protein belongs to the class I-like SAM-binding methyltransferase superfamily. rRNA adenine N(6)-methyltransferase family. RsmA subfamily.

The protein resides in the cytoplasm. It catalyses the reaction adenosine(1518)/adenosine(1519) in 16S rRNA + 4 S-adenosyl-L-methionine = N(6)-dimethyladenosine(1518)/N(6)-dimethyladenosine(1519) in 16S rRNA + 4 S-adenosyl-L-homocysteine + 4 H(+). Specifically dimethylates two adjacent adenosines (A1518 and A1519) in the loop of a conserved hairpin near the 3'-end of 16S rRNA in the 30S particle. May play a critical role in biogenesis of 30S subunits. This chain is Ribosomal RNA small subunit methyltransferase A, found in Citrobacter koseri (strain ATCC BAA-895 / CDC 4225-83 / SGSC4696).